The following is an 834-amino-acid chain: Translation initiation factor IF-2 (834 aa).

The disordered stretch occupies residues 1 to 247 (MTEEKKFSGS…STPATVRKEQ (247 aa)). The span at 45–101 (GGSRPSRPARPNNNNQNRPNNGGQSQNRNNQNRSNTSTGGQNRSNNGGNRNNRPGSR) shows a compositional bias: low complexity. The span at 109-125 (PMIREKKNWSTKPREGQ) shows a compositional bias: basic and acidic residues. Composition is skewed to low complexity over residues 149-165 (ASAAAKHPKKPAAATKP) and 173-201 (ATKPATASTTTGAGKFGGALASGNNSARN). Residues 224–233 (GSKKSRRIAA) are compositionally biased toward basic residues. One can recognise a tr-type G domain in the interval 335 to 504 (SRPPVVTIMG…LLQAEVLELK (170 aa)). The segment at 344–351 (GHVDHGKT) is G1. Residue 344 to 351 (GHVDHGKT) coordinates GTP. Positions 369–373 (GITQH) are G2. The interval 390-393 (DTPG) is G3. Residues 390 to 394 (DTPGH) and 444 to 447 (NKID) each bind GTP. Residues 444 to 447 (NKID) form a G4 region. The interval 480–482 (SAK) is G5.

The protein belongs to the TRAFAC class translation factor GTPase superfamily. Classic translation factor GTPase family. IF-2 subfamily.

Its subcellular location is the cytoplasm. One of the essential components for the initiation of protein synthesis. Protects formylmethionyl-tRNA from spontaneous hydrolysis and promotes its binding to the 30S ribosomal subunits. Also involved in the hydrolysis of GTP during the formation of the 70S ribosomal complex. The sequence is that of Translation initiation factor IF-2 from Leuconostoc mesenteroides subsp. mesenteroides (strain ATCC 8293 / DSM 20343 / BCRC 11652 / CCM 1803 / JCM 6124 / NCDO 523 / NBRC 100496 / NCIMB 8023 / NCTC 12954 / NRRL B-1118 / 37Y).